The primary structure comprises 103 residues: Pyrimidine/purine nucleoside phosphorylase (103 aa).

It belongs to the nucleoside phosphorylase PpnP family.

It carries out the reaction a purine D-ribonucleoside + phosphate = a purine nucleobase + alpha-D-ribose 1-phosphate. The catalysed reaction is adenosine + phosphate = alpha-D-ribose 1-phosphate + adenine. The enzyme catalyses cytidine + phosphate = cytosine + alpha-D-ribose 1-phosphate. It catalyses the reaction guanosine + phosphate = alpha-D-ribose 1-phosphate + guanine. It carries out the reaction inosine + phosphate = alpha-D-ribose 1-phosphate + hypoxanthine. The catalysed reaction is thymidine + phosphate = 2-deoxy-alpha-D-ribose 1-phosphate + thymine. The enzyme catalyses uridine + phosphate = alpha-D-ribose 1-phosphate + uracil. It catalyses the reaction xanthosine + phosphate = alpha-D-ribose 1-phosphate + xanthine. In terms of biological role, catalyzes the phosphorolysis of diverse nucleosides, yielding D-ribose 1-phosphate and the respective free bases. Can use uridine, adenosine, guanosine, cytidine, thymidine, inosine and xanthosine as substrates. Also catalyzes the reverse reactions. In Nocardia farcinica (strain IFM 10152), this protein is Pyrimidine/purine nucleoside phosphorylase.